The following is a 290-amino-acid chain: UPF0761 membrane protein YihY (290 aa).

Residues 1–43 (MLKTVHQKAGRHTRPVRAWLKLLWQRIDEDNMTTLAGNLAYVS) lie on the Cytoplasmic side of the membrane. The chain crosses the membrane as a helical span at residues 44 to 64 (LLSLVPLIAVVFALFAAFPMF). The Periplasmic segment spans residues 65–103 (SDVSIQLRHFIFANFMPATGDVIQRYIEQFVANSNKMTA). A helical membrane pass occupies residues 104 to 124 (VGACGLIVTALLLMYAIDSAL). Over 125–139 (NTIWRSKRTRPKVYS) the chain is Cytoplasmic. Residues 140-160 (FAVYWMILTLGPLLAGVSLAI) traverse the membrane as a helical segment. At 161-179 (SSYLLSLRWASDLNTVIDN) the chain is on the periplasmic side. A helical membrane pass occupies residues 180 to 200 (VLHILPLLLSWISFWLLYSIV). Residues 201–209 (PTTRVPNRD) lie on the Cytoplasmic side of the membrane. Residues 210–230 (ALVGAFVAALLFEAGKKGFAL) form a helical membrane-spanning segment. Residues 231–243 (YITMFPSYQLIYG) are Periplasmic-facing. A helical transmembrane segment spans residues 244–264 (VLAVIPILFVWVYWTWCIVLL). Residues 265–290 (GAEITVTLGEYRKLKQAAEQEEADQP) are Cytoplasmic-facing.

The protein belongs to the UPF0761 family.

The protein localises to the cell inner membrane. This chain is UPF0761 membrane protein YihY, found in Salmonella typhimurium (strain LT2 / SGSC1412 / ATCC 700720).